Here is a 657-residue protein sequence, read N- to C-terminus: LIM and SH3 domain protein Lasp (657 aa).

In terms of domain architecture, LIM zinc-binding spans 3 to 63 (KTCARCQKVV…EAHIPKAKAT (61 aa)). Nebulin repeat units lie at residues 64-95 (AIAD…KAKG) and 96-130 (KFTQ…KKAA). Disordered regions lie at residues 130-151 (AMEK…EYFS), 164-223 (PTAS…PIQH), 235-257 (YQQL…QLHD), 294-318 (LYPT…QQQA), 332-415 (NSHH…SAAS), and 460-528 (KQHA…PKRI). Polar residues predominate over residues 140-150 (VSDSSNESEYF). 2 stretches are compositionally biased toward low complexity: residues 172-215 (AATT…QQQT) and 236-254 (QQLQ…QQQQ). Residues 332 to 341 (NSHHPSGNSV) are compositionally biased toward polar residues. The span at 342 to 357 (DQYDQPQQQQHQPQQQ) shows a compositional bias: low complexity. Residues 358 to 370 (STNPTLVAAQQQQ) show a composition bias toward polar residues. Low complexity predominate over residues 371–403 (SHHSLLNNNASNGGISHSHHSNINNNGHGSQNQ). Positions 460–475 (KQHASNGHMPNQQQQH) are enriched in polar residues. Residues Ser-505 and Ser-530 each carry the phosphoserine modification. Residues 548–592 (EQAHQQQKHQQYYQQVQMMQQQEHPPQQQQMRQQPSYSSLQEKQS) form a disordered region. Low complexity predominate over residues 549–586 (QAHQQQKHQQYYQQVQMMQQQEHPPQQQQMRQQPSYSS). Residues 596 to 657 (TAMRVYRAIY…PANYVEQAVI (62 aa)) form the SH3 domain.

Interacts with osk.

The protein is LIM and SH3 domain protein Lasp of Drosophila melanogaster (Fruit fly).